Reading from the N-terminus, the 470-residue chain is Glutamyl-tRNA(Gln) amidotransferase subunit A (470 aa).

Residues K71 and S146 each act as charge relay system in the active site. S170 functions as the Acyl-ester intermediate in the catalytic mechanism.

It belongs to the amidase family. GatA subfamily. In terms of assembly, heterotrimer of A, B and C subunits.

The catalysed reaction is L-glutamyl-tRNA(Gln) + L-glutamine + ATP + H2O = L-glutaminyl-tRNA(Gln) + L-glutamate + ADP + phosphate + H(+). Functionally, allows the formation of correctly charged Gln-tRNA(Gln) through the transamidation of misacylated Glu-tRNA(Gln) in organisms which lack glutaminyl-tRNA synthetase. The reaction takes place in the presence of glutamine and ATP through an activated gamma-phospho-Glu-tRNA(Gln). This chain is Glutamyl-tRNA(Gln) amidotransferase subunit A, found in Akkermansia muciniphila (strain ATCC BAA-835 / DSM 22959 / JCM 33894 / BCRC 81048 / CCUG 64013 / CIP 107961 / Muc).